A 375-amino-acid chain; its full sequence is Succinyl-diaminopimelate desuccinylase (375 aa).

Histidine 66 is a Zn(2+) binding site. The active site involves aspartate 68. Aspartate 99 lines the Zn(2+) pocket. Catalysis depends on glutamate 133, which acts as the Proton acceptor. Residues glutamate 134, glutamate 162, and histidine 348 each contribute to the Zn(2+) site.

This sequence belongs to the peptidase M20A family. DapE subfamily. In terms of assembly, homodimer. The cofactor is Zn(2+). It depends on Co(2+) as a cofactor.

The enzyme catalyses N-succinyl-(2S,6S)-2,6-diaminopimelate + H2O = (2S,6S)-2,6-diaminopimelate + succinate. It functions in the pathway amino-acid biosynthesis; L-lysine biosynthesis via DAP pathway; LL-2,6-diaminopimelate from (S)-tetrahydrodipicolinate (succinylase route): step 3/3. In terms of biological role, catalyzes the hydrolysis of N-succinyl-L,L-diaminopimelic acid (SDAP), forming succinate and LL-2,6-diaminopimelate (DAP), an intermediate involved in the bacterial biosynthesis of lysine and meso-diaminopimelic acid, an essential component of bacterial cell walls. The polypeptide is Succinyl-diaminopimelate desuccinylase (Serratia proteamaculans (strain 568)).